We begin with the raw amino-acid sequence, 432 residues long: Adenylosuccinate synthetase (432 aa).

GTP is bound by residues 13–19 (GDEGKGK) and 41–43 (GHT). D14 acts as the Proton acceptor in catalysis. Mg(2+)-binding residues include D14 and G41. Residues 14–17 (DEGK), 39–42 (NAGH), T130, R144, Q225, T240, and R304 contribute to the IMP site. The Proton donor role is filled by H42. 300 to 306 (ATTGRKR) provides a ligand contact to substrate. GTP-binding positions include R306, 332-334 (KLD), and 415-417 (STG).

The protein belongs to the adenylosuccinate synthetase family. Homodimer. Mg(2+) serves as cofactor.

The protein resides in the cytoplasm. The catalysed reaction is IMP + L-aspartate + GTP = N(6)-(1,2-dicarboxyethyl)-AMP + GDP + phosphate + 2 H(+). It participates in purine metabolism; AMP biosynthesis via de novo pathway; AMP from IMP: step 1/2. Functionally, plays an important role in the de novo pathway of purine nucleotide biosynthesis. Catalyzes the first committed step in the biosynthesis of AMP from IMP. The sequence is that of Adenylosuccinate synthetase from Vibrio cholerae serotype O1 (strain ATCC 39541 / Classical Ogawa 395 / O395).